We begin with the raw amino-acid sequence, 492 residues long: N-succinylglutamate 5-semialdehyde dehydrogenase (492 aa).

220–225 serves as a coordination point for NAD(+); it reads GSANTG. Catalysis depends on residues Glu-243 and Cys-277.

The protein belongs to the aldehyde dehydrogenase family. AstD subfamily.

The catalysed reaction is N-succinyl-L-glutamate 5-semialdehyde + NAD(+) + H2O = N-succinyl-L-glutamate + NADH + 2 H(+). It functions in the pathway amino-acid degradation; L-arginine degradation via AST pathway; L-glutamate and succinate from L-arginine: step 4/5. Catalyzes the NAD-dependent reduction of succinylglutamate semialdehyde into succinylglutamate. The polypeptide is N-succinylglutamate 5-semialdehyde dehydrogenase (Escherichia coli (strain SE11)).